The following is a 426-amino-acid chain: Histidine--tRNA ligase (426 aa).

It belongs to the class-II aminoacyl-tRNA synthetase family. As to quaternary structure, homodimer.

Its subcellular location is the cytoplasm. It catalyses the reaction tRNA(His) + L-histidine + ATP = L-histidyl-tRNA(His) + AMP + diphosphate + H(+). The sequence is that of Histidine--tRNA ligase from Streptococcus gordonii (strain Challis / ATCC 35105 / BCRC 15272 / CH1 / DL1 / V288).